A 399-amino-acid polypeptide reads, in one-letter code: Argininosuccinate synthase (399 aa).

Ala-9 to Ser-17 lines the ATP pocket. Tyr-85 is an L-citrulline binding site. Position 115 (Gly-115) interacts with ATP. The L-aspartate site is built by Thr-117, Asn-121, and Asp-122. Asn-121 is a binding site for L-citrulline. Residues Arg-125, Ser-173, Glu-258, and Tyr-270 each coordinate L-citrulline.

Belongs to the argininosuccinate synthase family. Type 1 subfamily. In terms of assembly, homotetramer.

Its subcellular location is the cytoplasm. It catalyses the reaction L-citrulline + L-aspartate + ATP = 2-(N(omega)-L-arginino)succinate + AMP + diphosphate + H(+). It functions in the pathway amino-acid biosynthesis; L-arginine biosynthesis; L-arginine from L-ornithine and carbamoyl phosphate: step 2/3. The sequence is that of Argininosuccinate synthase from Streptococcus thermophilus (strain CNRZ 1066).